The chain runs to 543 residues: CTP synthase (543 aa).

The tract at residues 1–265 (MTRYIFVTGG…DDFVVERFGL (265 aa)) is amidoligase domain. Serine 13 is a binding site for CTP. Serine 13 is a UTP binding site. Residues 14–19 (SLGKGI) and aspartate 71 each bind ATP. Mg(2+) contacts are provided by aspartate 71 and glutamate 139. Residues 146 to 148 (DIE), 186 to 191 (KTKPTQ), and lysine 222 each bind CTP. Residues 186 to 191 (KTKPTQ) and lysine 222 each bind UTP. The Glutamine amidotransferase type-1 domain maps to 290–541 (TIAMVGKYME…VNAALAQKAK (252 aa)). Position 351 (glycine 351) interacts with L-glutamine. Residue cysteine 378 is the Nucleophile; for glutamine hydrolysis of the active site. Residues 379–382 (LGMQ), glutamate 402, and arginine 469 contribute to the L-glutamine site. Active-site residues include histidine 514 and glutamate 516.

The protein belongs to the CTP synthase family. As to quaternary structure, homotetramer.

It carries out the reaction UTP + L-glutamine + ATP + H2O = CTP + L-glutamate + ADP + phosphate + 2 H(+). It catalyses the reaction L-glutamine + H2O = L-glutamate + NH4(+). The catalysed reaction is UTP + NH4(+) + ATP = CTP + ADP + phosphate + 2 H(+). The protein operates within pyrimidine metabolism; CTP biosynthesis via de novo pathway; CTP from UDP: step 2/2. Allosterically activated by GTP, when glutamine is the substrate; GTP has no effect on the reaction when ammonia is the substrate. The allosteric effector GTP functions by stabilizing the protein conformation that binds the tetrahedral intermediate(s) formed during glutamine hydrolysis. Inhibited by the product CTP, via allosteric rather than competitive inhibition. Catalyzes the ATP-dependent amination of UTP to CTP with either L-glutamine or ammonia as the source of nitrogen. Regulates intracellular CTP levels through interactions with the four ribonucleotide triphosphates. This chain is CTP synthase, found in Ectopseudomonas mendocina (strain ymp) (Pseudomonas mendocina).